Here is a 102-residue protein sequence, read N- to C-terminus: NADH-quinone oxidoreductase subunit K (102 aa).

A run of 3 helical transmembrane segments spans residues 6 to 26 (LEHGLAVAGILFCLGLVGLMV), 30 to 50 (ILFVLMSLEIMMNAAALAFIV), and 62 to 82 (VMFILVISLAAAEASIGLAIL).

It belongs to the complex I subunit 4L family. As to quaternary structure, NDH-1 is composed of 13 different subunits. Subunits NuoA, H, J, K, L, M, N constitute the membrane sector of the complex.

Its subcellular location is the cell inner membrane. It carries out the reaction a quinone + NADH + 5 H(+)(in) = a quinol + NAD(+) + 4 H(+)(out). In terms of biological role, NDH-1 shuttles electrons from NADH, via FMN and iron-sulfur (Fe-S) centers, to quinones in the respiratory chain. The immediate electron acceptor for the enzyme in this species is believed to be ubiquinone. Couples the redox reaction to proton translocation (for every two electrons transferred, four hydrogen ions are translocated across the cytoplasmic membrane), and thus conserves the redox energy in a proton gradient. This Pseudomonas fluorescens (strain SBW25) protein is NADH-quinone oxidoreductase subunit K.